The primary structure comprises 95 residues: MKDPRDVLKRPVITERSADLMTEKKYTFEVDVKANKTEVKDAVEQIFGVKVEKVNIMNYKGKFKRVGRYSGMTNKRRKAIVKLTEDSKEIEIFEA.

It belongs to the universal ribosomal protein uL23 family. As to quaternary structure, part of the 50S ribosomal subunit. Contacts protein L29, and trigger factor when it is bound to the ribosome.

In terms of biological role, one of the early assembly proteins it binds 23S rRNA. One of the proteins that surrounds the polypeptide exit tunnel on the outside of the ribosome. Forms the main docking site for trigger factor binding to the ribosome. The sequence is that of Large ribosomal subunit protein uL23 from Bacillus licheniformis (strain ATCC 14580 / DSM 13 / JCM 2505 / CCUG 7422 / NBRC 12200 / NCIMB 9375 / NCTC 10341 / NRRL NRS-1264 / Gibson 46).